Consider the following 601-residue polypeptide: Alpha-terpineol synthase, chloroplastic (601 aa).

The N-terminal 47 residues, 1 to 47 (MSTISIHHVGILRNPLHSKSKRASINKPWSLSLPRSSSASRLVEPCR), are a transit peptide targeting the chloroplast. Mn(2+)-binding residues include Asp-357 and Asp-361. The DDXXD motif signature appears at 357–361 (DDVYD). Homodimerization stretches follow at residues 363–369 (YGTLDEL) and 435–471 (EAEW…ELSL). Positions 499 and 507 each coordinate Mn(2+).

It belongs to the terpene synthase family. In terms of assembly, homodimer. It depends on Mn(2+) as a cofactor. Mg(2+) serves as cofactor.

Its subcellular location is the plastid. It is found in the chloroplast. The catalysed reaction is (2E)-geranyl diphosphate + H2O = (S)-alpha-terpineol + diphosphate. The enzyme catalyses (2E)-geranyl diphosphate + H2O = (R)-alpha-terpineol + diphosphate. It functions in the pathway secondary metabolite biosynthesis; terpenoid biosynthesis. Functionally, involved in the biosynthesis of phenolic monoterpenes natural products. Monoterpene synthase which catalyzes the conversion of geranyl diphosphate (GPP) to alpha-terpineol (isomer is not determined). The chain is Alpha-terpineol synthase, chloroplastic from Thymus caespititius (Cretan thyme).